The sequence spans 397 residues: Probable pyruvate dehydrogenase E1 component subunit alpha, mitochondrial (397 aa).

9 residues coordinate pyruvate: His-86, Tyr-112, Arg-113, Gly-159, Val-161, Asp-190, Gly-191, Ala-192, and Asn-219. Thiamine diphosphate is bound by residues Tyr-112, Arg-113, Gly-159, Val-161, Asp-190, Gly-191, Ala-192, Asn-219, and His-286. Asp-190 is a Mg(2+) binding site. Mg(2+) is bound at residue Asn-219.

Tetramer of 2 alpha and 2 beta subunits. Requires thiamine diphosphate as cofactor. It depends on Mg(2+) as a cofactor.

The protein localises to the mitochondrion matrix. The catalysed reaction is N(6)-[(R)-lipoyl]-L-lysyl-[protein] + pyruvate + H(+) = N(6)-[(R)-S(8)-acetyldihydrolipoyl]-L-lysyl-[protein] + CO2. Its activity is regulated as follows. E1 activity is regulated by phosphorylation (inactivation) and dephosphorylation (activation) of the alpha subunit. In terms of biological role, the pyruvate dehydrogenase complex catalyzes the overall conversion of pyruvate to acetyl-CoA and CO(2). It contains multiple copies of three enzymatic components: pyruvate dehydrogenase (E1), dihydrolipoamide acetyltransferase (E2) and lipoamide dehydrogenase (E3). This is Probable pyruvate dehydrogenase E1 component subunit alpha, mitochondrial from Caenorhabditis elegans.